A 348-amino-acid chain; its full sequence is Dihydroorotase (348 aa).

Zn(2+)-binding residues include histidine 17 and histidine 19. Substrate is bound by residues 19–21 and asparagine 45; that span reads HLR. Zn(2+) is bound by residues lysine 103, histidine 140, and histidine 178. Lysine 103 is subject to N6-carboxylysine. Histidine 140 is a substrate binding site. A substrate-binding site is contributed by leucine 223. Aspartate 251 provides a ligand contact to Zn(2+). The active site involves aspartate 251. Histidine 255 and alanine 267 together coordinate substrate.

The protein belongs to the metallo-dependent hydrolases superfamily. DHOase family. Class II DHOase subfamily. As to quaternary structure, homodimer. The cofactor is Zn(2+).

It catalyses the reaction (S)-dihydroorotate + H2O = N-carbamoyl-L-aspartate + H(+). Its pathway is pyrimidine metabolism; UMP biosynthesis via de novo pathway; (S)-dihydroorotate from bicarbonate: step 3/3. In terms of biological role, catalyzes the reversible cyclization of carbamoyl aspartate to dihydroorotate. The sequence is that of Dihydroorotase from Shigella sonnei (strain Ss046).